A 328-amino-acid polypeptide reads, in one-letter code: Beta-ketoacyl-[acyl-carrier-protein] synthase III (328 aa).

Active-site residues include C114 and H253. An ACP-binding region spans residues 254–258; sequence QANIR. N283 is an active-site residue.

The protein belongs to the thiolase-like superfamily. FabH family. Homodimer.

It is found in the cytoplasm. The catalysed reaction is malonyl-[ACP] + acetyl-CoA + H(+) = 3-oxobutanoyl-[ACP] + CO2 + CoA. It participates in lipid metabolism; fatty acid biosynthesis. Its function is as follows. Catalyzes the condensation reaction of fatty acid synthesis by the addition to an acyl acceptor of two carbons from malonyl-ACP. Catalyzes the first condensation reaction which initiates fatty acid synthesis and may therefore play a role in governing the total rate of fatty acid production. Possesses both acetoacetyl-ACP synthase and acetyl transacylase activities. Its substrate specificity determines the biosynthesis of branched-chain and/or straight-chain of fatty acids. The sequence is that of Beta-ketoacyl-[acyl-carrier-protein] synthase III from Clostridioides difficile (strain 630) (Peptoclostridium difficile).